The following is a 314-amino-acid chain: Oxidoreductase poxI (314 aa).

This sequence belongs to the NmrA-type oxidoreductase family. Isoflavone reductase subfamily.

It participates in secondary metabolite biosynthesis. Oxidoreductase; part of the gene cluster that mediates the biosynthesis of oxaleimides, cytotoxic compounds containing an unusual disubstituted succinimide moiety. The first step of the pathway is provided by the HR-PKS poxF that serves in a new mode of collaborative biosynthesis with the PKS-NRPS poxE, by providing the olefin containing amino acid substrate via the synthesis of an ACP-bound dec-4-enoate. The cytochrome P450 monooxygenase poxM-catalyzed oxidation at the alpha-position creates the enzyme-bound 2-hydroxydec-4-enoyl-ACP thioester, which may be prone to spontaneous hydrolysis to yield 2-hydroxydec-4-enoic acid due to increased electrophilicity of the carbonyl. 2-hydroxydec-4-enoic acid can then be further oxidized by poxM to yield the alpha-ketoacid 2-oxodec-4-enoicacid, which is reductively aminated by the aminotransferase poxL to yield (S,E)-2-aminodec-4-enoic acid. The Hybrid PKS-NRPS synthetase poxE then performs condensation between the octaketide product of its PKS modules and the amino group of (S,E)-2-aminodec-4-enoic acid which is activated and incorporated by the adenylation domain. The resulting aminoacyl product can be cyclized by the Diels-Alderase PoxQ and reductively released by the reductive (R) domain of poxE to yield an aldehyde intermediate. The released aldehyde is then substrate for a Knoevenagel condensation by the hydrolyase poxO followed by an oxidation at the 5-position of the pyrrolidone ring. The presence of the olefin from the amino acid building block allows for migration of the substituted allyl group to occur. This allylic transposition reaction takes place in a conjugate addition, semipinacol-like fashion to yield a succinimide intermediate. Iterative two-electron oxidations of the C7 methyl of the succinimide intermediate to the carboxylic acid can be catalyzed by one of two remaining cytochrome P450 monooxygenasess poxC or poxD to yield oxaleimide A. Subsequent oxidation yields the maleimide scaffold oxaleimide I. Both oxaleimide A and oxaleimide I can undergo oxidative modifications in the decalin ring to yield the series of products oxaleimides B to H. The polypeptide is Oxidoreductase poxI (Penicillium oxalicum (strain 114-2 / CGMCC 5302) (Penicillium decumbens)).